Consider the following 292-residue polypeptide: Homoserine kinase (292 aa).

84-94 (PLSRGLGSSSA) is an ATP binding site.

Belongs to the GHMP kinase family. Homoserine kinase subfamily.

The protein localises to the cytoplasm. It catalyses the reaction L-homoserine + ATP = O-phospho-L-homoserine + ADP + H(+). It functions in the pathway amino-acid biosynthesis; L-threonine biosynthesis; L-threonine from L-aspartate: step 4/5. Catalyzes the ATP-dependent phosphorylation of L-homoserine to L-homoserine phosphate. This chain is Homoserine kinase, found in Campylobacter jejuni subsp. jejuni serotype O:6 (strain 81116 / NCTC 11828).